The primary structure comprises 372 residues: MRDKVTGARRWVVKIGSALLTADGRGLDRNAMAVWVEQMVALHCAGIELVLVSSGAVAAGMSRLGWVSRPSAMHELQAAASVGQMGLVQAWESSFALHGLQTAQVLLTHDDLSDRKRYLNARSTLRTLVELGVVPVINENDTVVTDEIRFGDNDTLAALVANLVEADLLVILTDRDGMFDADPRNNPDAQLIYEARADDPQLDAVAGGSAGALGRGGMQTKLRAARLAARSGGHTVIVGGRIERVLDRLRAGERLGTLLTPDRSRKAARKQWLAGHLQMRGTLVLDDGAVKAVSQDHKSLLPVGVKAVQGSFRRGEMVVCVDQSGREVARGLVNYSALEAQKILGQPTDAIEALLGYVDGPELVHRDNLVLV.

Lys14 is a binding site for ATP. Ser54, Asp141, and Asn153 together coordinate substrate. An ATP-binding site is contributed by 173 to 174; the sequence is TD. In terms of domain architecture, PUA spans 280-358; it reads RGTLVLDDGA…DAIEALLGYV (79 aa).

Belongs to the glutamate 5-kinase family.

Its subcellular location is the cytoplasm. The enzyme catalyses L-glutamate + ATP = L-glutamyl 5-phosphate + ADP. The protein operates within amino-acid biosynthesis; L-proline biosynthesis; L-glutamate 5-semialdehyde from L-glutamate: step 1/2. Its function is as follows. Catalyzes the transfer of a phosphate group to glutamate to form L-glutamate 5-phosphate. This is Glutamate 5-kinase from Pseudomonas paraeruginosa (strain DSM 24068 / PA7) (Pseudomonas aeruginosa (strain PA7)).